The sequence spans 194 residues: Holliday junction branch migration complex subunit RuvA (194 aa).

The domain I stretch occupies residues 1–64 (MIGRLRGVLT…DDSAALYGFL (64 aa)). The segment at 65–140 (SESERRLFRH…RAADFNNGIS (76 aa)) is domain II. The tract at residues 140-144 (STSGK) is flexible linker. The domain III stretch occupies residues 145-194 (LNLDTVSEAALALQQLGYKPAEAARMARDAGTESDDVASVIKKALQAALR).

The protein belongs to the RuvA family. As to quaternary structure, homotetramer. Forms an RuvA(8)-RuvB(12)-Holliday junction (HJ) complex. HJ DNA is sandwiched between 2 RuvA tetramers; dsDNA enters through RuvA and exits via RuvB. An RuvB hexamer assembles on each DNA strand where it exits the tetramer. Each RuvB hexamer is contacted by two RuvA subunits (via domain III) on 2 adjacent RuvB subunits; this complex drives branch migration. In the full resolvosome a probable DNA-RuvA(4)-RuvB(12)-RuvC(2) complex forms which resolves the HJ.

The protein resides in the cytoplasm. The RuvA-RuvB-RuvC complex processes Holliday junction (HJ) DNA during genetic recombination and DNA repair, while the RuvA-RuvB complex plays an important role in the rescue of blocked DNA replication forks via replication fork reversal (RFR). RuvA specifically binds to HJ cruciform DNA, conferring on it an open structure. The RuvB hexamer acts as an ATP-dependent pump, pulling dsDNA into and through the RuvAB complex. HJ branch migration allows RuvC to scan DNA until it finds its consensus sequence, where it cleaves and resolves the cruciform DNA. This is Holliday junction branch migration complex subunit RuvA from Xylella fastidiosa (strain 9a5c).